A 90-amino-acid chain; its full sequence is Lectin-1 (90 aa).

Pyrrolidone carboxylic acid is present on Q1. A disulfide bond links C46 and C71.

The N-terminus is blocked. In terms of processing, contains seven disulfide bonds. Post-translationally, proteolytically cleaved. Major form may consist of cleaved, disulfide-bonded subunits.

Lectin with specificity for complex N-linked glycans and O-linked glycans. Has hemagglutinating activity towards rabbit erythrocytes that is inhibited by N-acetyl-D-galactosamine. The sequence is that of Lectin-1 from Hypnea cervicornis (Brazilian red alga).